The chain runs to 123 residues: Large ribosomal subunit protein bL20 (123 aa).

The protein belongs to the bacterial ribosomal protein bL20 family.

In terms of biological role, binds directly to 23S ribosomal RNA and is necessary for the in vitro assembly process of the 50S ribosomal subunit. It is not involved in the protein synthesizing functions of that subunit. In Pseudothermotoga lettingae (strain ATCC BAA-301 / DSM 14385 / NBRC 107922 / TMO) (Thermotoga lettingae), this protein is Large ribosomal subunit protein bL20.